The primary structure comprises 389 residues: STE20-related kinase adapter protein alpha (389 aa).

A Protein kinase domain is found at 11-321; the sequence is YELLTIIGRG…AGALLNHPFF (311 aa).

The protein belongs to the protein kinase superfamily. STE Ser/Thr protein kinase family. STE20 subfamily. Component of a trimeric complex composed of STK11/LKB1, STRAD (STRADA or STRADB) and CAB39/MO25 (CAB39/MO25alpha or CAB39L/MO25beta): the complex tethers STK11/LKB1 in the cytoplasm and stimulates its catalytic activity. As to expression, expressed in brain, hypothalamus, heart and skeletal muscle.

The protein resides in the nucleus. The protein localises to the cytoplasm. Pseudokinase which, in complex with CAB39/MO25 (CAB39/MO25alpha or CAB39L/MO25beta), binds to and activates STK11/LKB1. Adopts a closed conformation typical of active protein kinases and binds STK11/LKB1 as a pseudosubstrate, promoting conformational change of STK11/LKB1 in an active conformation. This is STE20-related kinase adapter protein alpha (STRADA) from Gallus gallus (Chicken).